Here is a 1050-residue protein sequence, read N- to C-terminus: Integrin alpha-5 (1050 aa).

The signal sequence occupies residues 1 to 32 (MQLPRGSRVPGLVATFLFPVLCALLTFSSVRG). Residues 33-996 (FNLAVEQPAV…IHWAKPESSY (964 aa)) lie on the Extracellular side of the membrane. FG-GAP repeat units follow at residues 34–99 (NLAV…GTNC), 116–175 (DTPQ…NFTT), 183–235 (RTDF…QEAY), 249–301 (QTRQ…GTDL), 302–367 (RSLY…MEST), 368–426 (PHLI…GVDS), and 430–493 (QVLQ…ISPN). 3 N-linked (GlcNAc...) asparagine glycosylation sites follow: Asn-75, Asn-95, and Asn-98. Intrachain disulfides connect Cys-90–Cys-99 and Cys-145–Cys-166. N-linked (GlcNAc...) asparagine glycosylation occurs at Asn-172. Cys-182 and Cys-195 are oxidised to a cystine. Ca(2+)-binding residues include Glu-270, Ser-272, Asp-274, Thr-276, and Asp-278. N-linked (GlcNAc...) asparagine glycans are attached at residues Asn-287, Asn-297, and Asn-306. The Ca(2+) site is built by Asp-324, Asn-326, Asp-328, Leu-330, Asp-332, Asp-390, Asp-392, Asp-394, Asp-398, Asp-454, Asp-456, Asn-458, Tyr-460, and Asp-462. A disulfide bridge connects residues Cys-502 and Cys-513. 4 N-linked (GlcNAc...) asparagine glycosylation sites follow: Asn-507, Asn-515, Asn-521, and Asn-600. An intrachain disulfide couples Cys-519 to Cys-575. Cys-636 and Cys-642 form a disulfide bridge. Residues Asn-649, Asn-714, Asn-763, and Asn-861 are each glycosylated (N-linked (GlcNAc...) asparagine). Residues Cys-708 and Cys-721 are joined by a disulfide bond. 3 cysteine pairs are disulfide-bonded: Cys-839–Cys-958, Cys-862–Cys-922, and Cys-910–Cys-917. A helical transmembrane segment spans residues 997-1022 (GVPLWIIILAILIGLLLLALLIYVLY). The Cytoplasmic portion of the chain corresponds to 1023–1050 (KLGFFKRSYQYGTAMEKAELKPQAASEA). The GFFKR motif motif lies at 1025–1029 (GFFKR).

The protein belongs to the integrin alpha chain family. Heterodimer of an alpha and a beta subunit. The alpha subunit is composed of a heavy and a light chain linked by a disulfide bond. Alpha-5 associates with beta-1.

It localises to the cell membrane. The protein localises to the cell junction. Its subcellular location is the focal adhesion. Integrin alpha-5/beta-1 (ITGA5:ITGB1) is a receptor for fibronectin. It recognizes the sequence R-G-D in its ligands. ITGA5:ITGB1 acts as a receptor for fibrillin-1 (FBN1) and mediates R-G-D-dependent cell adhesion to FBN1. ITGA5:ITGB1 acts as a receptor for fibronectin (FN1) and mediates R-G-D-dependent cell adhesion to FN1. ITGA5:ITGB1 is a receptor for IL1B and binding is essential for IL1B signaling. ITGA5:ITGB3 is a receptor for soluble CD40LG and is required for CD40/CD40LG signaling. The protein is Integrin alpha-5 (itga5) of Xenopus laevis (African clawed frog).